We begin with the raw amino-acid sequence, 174 residues long: Thiol-disulfide oxidoreductase ResA (174 aa).

The chain crosses the membrane as a helical; Signal-anchor for type II membrane protein span at residues 11 to 30; that stretch reads TVILLLLLAALGYTIYANFF. One can recognise a Thioredoxin domain in the interval 36 to 174; sequence VAVGSTAPDF…IKQHLESIKP (139 aa). The cysteines at positions 74 and 77 are disulfide-linked.

This sequence belongs to the thioredoxin family. ResA subfamily.

It is found in the cell membrane. It participates in protein modification; cytochrome c assembly. Functionally, thiol-disulfide oxidoreductase which is required in disulfide reduction during c-type cytochrome synthesis. May accept reducing equivalents from CcdA, leading to breakage of disulfide bonds in apocytochrome c; following this reduction heme can be covalently attached. This is Thiol-disulfide oxidoreductase ResA from Geobacillus thermodenitrificans (strain NG80-2).